The primary structure comprises 208 residues: Small ribosomal subunit protein uS4 (208 aa).

In terms of domain architecture, S4 RNA-binding spans 98–161 (RRLDNVIYRM…KELEIIKESL (64 aa)).

It belongs to the universal ribosomal protein uS4 family. As to quaternary structure, part of the 30S ribosomal subunit. Contacts protein S5. The interaction surface between S4 and S5 is involved in control of translational fidelity.

Its function is as follows. One of the primary rRNA binding proteins, it binds directly to 16S rRNA where it nucleates assembly of the body of the 30S subunit. With S5 and S12 plays an important role in translational accuracy. This chain is Small ribosomal subunit protein uS4, found in Thermodesulfovibrio yellowstonii (strain ATCC 51303 / DSM 11347 / YP87).